A 662-amino-acid chain; its full sequence is DNA topoisomerase 4 subunit B (662 aa).

ATP-binding positions include Tyr-20, Asn-60, Asp-87, 129 to 135, and Lys-359; that span reads GLHGVGI. Positions 439–553 constitute a Toprim domain; sequence TELFIVEGDS…EGHLYLAKPP (115 aa). Positions 445, 518, and 520 each coordinate Mg(2+).

Belongs to the type II topoisomerase family. ParE type 1 subfamily. Heterotetramer composed of ParC and ParE. Mg(2+) serves as cofactor. The cofactor is Mn(2+). Requires Ca(2+) as cofactor.

The catalysed reaction is ATP-dependent breakage, passage and rejoining of double-stranded DNA.. Functionally, topoisomerase IV is essential for chromosome segregation. It relaxes supercoiled DNA. Performs the decatenation events required during the replication of a circular DNA molecule. The sequence is that of DNA topoisomerase 4 subunit B from Rickettsia felis (strain ATCC VR-1525 / URRWXCal2) (Rickettsia azadi).